Consider the following 310-residue polypeptide: MQPLQIAPCRLLYGLYRGLKSPASTGTRICPAMARPSSNMADFRKLFAKAKHIVIISGAGVSAESGVPTFRGAGGYWRKWQAQDLATPQAFARNPSLVWEFYHYRREVMLSKEPNPGHLAIAECEARLREQGRRVMVITQNIDELHRRAGTKNLLEIHGSLFKTRCTSCGIVAENYKSPICPALSGKGAPDPEAQDARIPVEKLPRCEEAGCGGLLRPHVVWFGENLDPAILEEVDKELTLCDLCLVVGTSSVVYPAAMFAPQVSARGVPVAEFNMETTPATNRFRFHFQGPCGTTLPEALAPHETGNVS.

A mitochondrion-targeting transit peptide spans 1-36 (MQPLQIAPCRLLYGLYRGLKSPASTGTRICPAMARP). One can recognise a Deacetylase sirtuin-type domain in the interval 37–307 (SSNMADFRKL…PEALAPHETG (271 aa)). An NAD(+)-binding site is contributed by 58 to 77 (GAGVSAESGVPTFRGAGGYW). Residues Y102 and R105 each coordinate substrate. 140–143 (QNID) serves as a coordination point for NAD(+). H158 (proton acceptor) is an active-site residue. Residues C166, C169, C207, and C212 each contribute to the Zn(2+) site. NAD(+)-binding positions include 249–251 (GTS), 275–277 (NME), and C293.

It belongs to the sirtuin family. Class III subfamily. Monomer. Homodimer. Interacts with CPS1. Interacts with PCCA. Requires Zn(2+) as cofactor.

It localises to the mitochondrion. It is found in the cytoplasm. The protein resides in the cytosol. Its subcellular location is the nucleus. It carries out the reaction N(6)-malonyl-L-lysyl-[protein] + NAD(+) + H2O = 2''-O-malonyl-ADP-D-ribose + nicotinamide + L-lysyl-[protein]. It catalyses the reaction N(6)-succinyl-L-lysyl-[protein] + NAD(+) + H2O = 2''-O-succinyl-ADP-D-ribose + nicotinamide + L-lysyl-[protein]. The enzyme catalyses N(6)-glutaryl-L-lysyl-[protein] + NAD(+) + H2O = 2''-O-glutaryl-ADP-D-ribose + nicotinamide + L-lysyl-[protein]. NAD-dependent lysine demalonylase, desuccinylase and deglutarylase that specifically removes malonyl, succinyl and glutaryl groups on target proteins. Activates CPS1 and contributes to the regulation of blood ammonia levels during prolonged fasting: acts by mediating desuccinylation and deglutarylation of CPS1, thereby increasing CPS1 activity in response to elevated NAD levels during fasting. Activates SOD1 by mediating its desuccinylation, leading to reduced reactive oxygen species. Activates SHMT2 by mediating its desuccinylation. Modulates ketogenesis through the desuccinylation and activation of HMGCS2. Has weak NAD-dependent protein deacetylase activity; however this activity may not be physiologically relevant in vivo. Can deacetylate cytochrome c (CYCS) and a number of other proteins in vitro such as UOX. The chain is NAD-dependent protein deacylase sirtuin-5, mitochondrial from Canis lupus familiaris (Dog).